The following is a 482-amino-acid chain: Probable glycine dehydrogenase (decarboxylating) subunit 2 (482 aa).

An N6-(pyridoxal phosphate)lysine modification is found at K269.

It belongs to the GcvP family. C-terminal subunit subfamily. In terms of assembly, the glycine cleavage system is composed of four proteins: P, T, L and H. In this organism, the P 'protein' is a heterodimer of two subunits. It depends on pyridoxal 5'-phosphate as a cofactor.

It carries out the reaction N(6)-[(R)-lipoyl]-L-lysyl-[glycine-cleavage complex H protein] + glycine + H(+) = N(6)-[(R)-S(8)-aminomethyldihydrolipoyl]-L-lysyl-[glycine-cleavage complex H protein] + CO2. Its function is as follows. The glycine cleavage system catalyzes the degradation of glycine. The P protein binds the alpha-amino group of glycine through its pyridoxal phosphate cofactor; CO(2) is released and the remaining methylamine moiety is then transferred to the lipoamide cofactor of the H protein. This is Probable glycine dehydrogenase (decarboxylating) subunit 2 from Pelodictyon phaeoclathratiforme (strain DSM 5477 / BU-1).